We begin with the raw amino-acid sequence, 177 residues long: Putative adenylate kinase (177 aa).

ATP is bound by residues G10, G12, K13, T14, and T15. Positions 30–50 (SLRDYAIEKGIGEMKGDELEV) are NMP. Residues 99-109 (ERGYSREKVGE) form an LID region. ATP-binding residues include R100 and K138.

Belongs to the adenylate kinase family. AK6 subfamily. As to quaternary structure, interacts with uS11. Not a structural component of 40S pre-ribosomes, but transiently interacts with them by binding to uS11.

The enzyme catalyses AMP + ATP = 2 ADP. The catalysed reaction is ATP + H2O = ADP + phosphate + H(+). Broad-specificity nucleoside monophosphate (NMP) kinase that catalyzes the reversible transfer of the terminal phosphate group between nucleoside triphosphates and monophosphates. Also has ATPase activity. Involved in the late maturation steps of the 30S ribosomal particles, specifically 16S rRNA maturation. While NMP activity is not required for ribosome maturation, ATPase activity is. Associates transiently with small ribosomal subunit protein uS11. ATP hydrolysis breaks the interaction with uS11. May temporarily remove uS11 from the ribosome to enable a conformational change of the ribosomal RNA that is needed for the final maturation step of the small ribosomal subunit. In Thermococcus gammatolerans (strain DSM 15229 / JCM 11827 / EJ3), this protein is Putative adenylate kinase.